The primary structure comprises 341 residues: Putative methyltransferase YGR283C (341 aa).

This sequence belongs to the class IV-like SAM-binding methyltransferase superfamily.

The protein resides in the nucleus. Its subcellular location is the nucleolus. The chain is Putative methyltransferase YGR283C from Saccharomyces cerevisiae (strain ATCC 204508 / S288c) (Baker's yeast).